Here is a 2230-residue protein sequence, read N- to C-terminus: Golgin subfamily A member 4 (2230 aa).

The disordered stretch occupies residues 1-64 (MFKKLKQKIS…SGDTQSFAQK (64 aa)). The residue at position 10 (S10) is a Phosphoserine. Low complexity predominate over residues 12 to 41 (EQQQLQQALAPAQASSNSSTPTRMRSRTSS). T39 bears the Phosphothreonine mark. A phosphoserine mark is found at S41, S71, S78, and S89. Basic and acidic residues predominate over residues 87–107 (SSSKESLVRTSSRESLNRLDL). The tract at residues 87–127 (SSSKESLVRTSSRESLNRLDLDSSTASFDPPSDMDSEAEDL) is disordered. Residues 133–203 (SLNKEQLIQR…EELQMDQQAK (71 aa)) are interaction with MACF1. Positions 133–2185 (SLNKEQLIQR…EYLRKVLFEY (2053 aa)) form a coiled coil. Phosphoserine is present on S266. 2 N-linked (GlcNAc...) asparagine glycosylation sites follow: N585 and N1612. The region spanning 2168 to 2215 (LFGEPTEFEYLRKVLFEYMMGRETKTMAKVITTVLKFPDDQTQKILER) is the GRIP domain. A Phosphothreonine modification is found at T2223.

Homodimer. Interacts with RAB6A. Interacts with GTP-bound ARL1 and ARL3. Interacts with MACF1. Directly interacts with TBC1D23. Interacts with FAM91A1; this interaction may be mediated by TBC1D23.

Its subcellular location is the cytoplasm. It localises to the golgi apparatus membrane. The protein localises to the golgi apparatus. The protein resides in the trans-Golgi network membrane. Its function is as follows. Involved in vesicular trafficking at the Golgi apparatus level. May play a role in delivery of transport vesicles containing GPI-linked proteins from the trans-Golgi network through its interaction with MACF1. Involved in endosome-to-Golgi trafficking. In Homo sapiens (Human), this protein is Golgin subfamily A member 4 (GOLGA4).